The primary structure comprises 518 residues: Calcium-dependent protein kinase 1 (518 aa).

Residues 1 to 10 show a composition bias toward basic residues; that stretch reads MGNRTSRHHR. Residues 1–49 are disordered; the sequence is MGNRTSRHHRAAPEQPPPQPKPKPQPQQQQQQWPRPQQPTPPPAAAPDA. Gly2 carries the N-myristoyl glycine lipid modification. The span at 14-25 shows a compositional bias: pro residues; that stretch reads EQPPPQPKPKPQ. Over residues 26–35 the composition is skewed to low complexity; sequence PQQQQQQWPR. Pro residues predominate over residues 36–45; it reads PQQPTPPPAA. Residues 66–324 form the Protein kinase domain; it reads YTFGRELGRG…SAEILNHPWI (259 aa). ATP contacts are provided by residues 72–80 and Lys95; that span reads LGRGQFGVT. Asp190 serves as the catalytic Proton acceptor. The autoinhibitory domain stretch occupies residues 330–360; that stretch reads APDKPLDITVISRMKQFRAMNKLKKVALKVV. EF-hand domains lie at 367–402, 403–438, 439–474, and 475–509; these read EEIT…LGTK, ISES…MNRL, EKED…YDMG, and DDKT…NNPE. The Ca(2+) site is built by Asp380, Asp382, Ser384, Thr386, Glu391, Asp416, Asp418, Asn420, Thr422, Glu427, Asp452, Asp454, Ser456, Tyr458, Glu463, Asp487, Asp489, Asp491, Arg493, and Glu498.

This sequence belongs to the protein kinase superfamily. Ser/Thr protein kinase family. CDPK subfamily. As to expression, expressed in roots and leaf blades.

The protein localises to the membrane. It catalyses the reaction L-seryl-[protein] + ATP = O-phospho-L-seryl-[protein] + ADP + H(+). The enzyme catalyses L-threonyl-[protein] + ATP = O-phospho-L-threonyl-[protein] + ADP + H(+). Activated by calcium. Autophosphorylation may play an important role in the regulation of the kinase activity. In terms of biological role, may play a role in signal transduction pathways that involve calcium as a second messenger. The sequence is that of Calcium-dependent protein kinase 1 from Oryza sativa subsp. japonica (Rice).